Here is a 278-residue protein sequence, read N- to C-terminus: MCCSGLAMTLRDDEHAVLADGELTVLGRIRSASNATFLCESTLGLRSLHCVYKPVSGERPLWDFPDGTLAGRELSAYLVSTQLGWNLVPHTIIRDGPAGIGMLQLWVQQPGDAVDSDPLPGPDLVDLFPAHRPRPGYLPVLRAYDYAGDEVVLMHADDIRLRRMAVFDVLINNADRKGGHILCGIDGQVYGVDHGLCLHVENKLRTVLWGWAGKPIDDQILQAVAGLADALGGPLAEALAGRIAAAEIGALRRRAQSLLDQPVMPGPNGHRPIPWPAF.

The polypeptide is Protein Rv2133c (Mycobacterium tuberculosis (strain ATCC 25618 / H37Rv)).